The sequence spans 162 residues: Class I hydrophobin dewC (162 aa).

Residues 1–21 (MQFTIASLIATAVLGLQMASA) form the signal peptide. Disulfide bonds link cysteine 43/cysteine 119, cysteine 50/cysteine 113, cysteine 51/cysteine 90, and cysteine 120/cysteine 156.

This sequence belongs to the fungal hydrophobin family. In terms of assembly, self-assembles to form functional amyloid fibrils called rodlets. Self-assembly into fibrillar rodlets occurs spontaneously at hydrophobic:hydrophilic interfaces and the rodlets further associate laterally to form amphipathic monolayers.

It is found in the secreted. Its subcellular location is the spore wall. In terms of biological role, aerial growth, conidiation, and dispersal of filamentous fungi in the environment rely upon a capability of their secreting small amphipathic proteins called hydrophobins (HPBs) with low sequence identity. Class I can self-assemble into an outermost layer of rodlet bundles on aerial cell surfaces, conferring cellular hydrophobicity that supports fungal growth, development and dispersal; whereas Class II form highly ordered films at water-air interfaces through intermolecular interactions but contribute nothing to the rodlet structure. DewC is a class I hydrophobin that contributes to the hydrophobicity of the spore surface. The protein is Class I hydrophobin dewC of Emericella nidulans (strain FGSC A4 / ATCC 38163 / CBS 112.46 / NRRL 194 / M139) (Aspergillus nidulans).